A 118-amino-acid polypeptide reads, in one-letter code: DNA-binding protein SSO0352 (118 aa).

This sequence belongs to the PDCD5 family.

The protein is DNA-binding protein SSO0352 of Saccharolobus solfataricus (strain ATCC 35092 / DSM 1617 / JCM 11322 / P2) (Sulfolobus solfataricus).